A 219-amino-acid polypeptide reads, in one-letter code: uncharacterized protein (219 aa).

This is an uncharacterized protein from Rickettsia prowazekii (strain Madrid E).